The primary structure comprises 32 residues: uncharacterized protein (32 aa).

This is an uncharacterized protein from Schizosaccharomyces pombe (strain 972 / ATCC 24843) (Fission yeast).